A 1775-amino-acid polypeptide reads, in one-letter code: Atrochrysone carboxylic acid synthase (1775 aa).

Residues 35–262 (LRRLQALSKD…YAKWASLPIF (228 aa)) enclose the Starter acyltransferase (SAT) domain. In terms of domain architecture, Ketosynthase family 3 (KS3) spans 400 to 833 (DSKIAIVGMS…GGNTTMLLEE (434 aa)). Residues C573, H708, and H750 each act as for beta-ketoacyl synthase activity in the active site. The 311-residue stretch at 934 to 1244 (FAFTGQGAFY…ENNWNTLADS (311 aa)) folds into the Malonyl-CoA:ACP transacylase (MAT) domain. A product template (PT) domain region spans residues 1313 to 1631 (TSSIHQVLQE…RSLLPTFFSP (319 aa)). Positions 1317-1451 (HQVLQEDVTG…SAVVEYGDAN (135 aa)) are N-terminal hotdog fold. Residues 1317 to 1626 (HQVLQEDVTG…FRRFPRSLLP (310 aa)) form the PKS/mFAS DH domain. H1349 functions as the Proton acceptor; for dehydratase activity in the catalytic mechanism. A C-terminal hotdog fold region spans residues 1480–1626 (AAVLPRNMAY…FRRFPRSLLP (147 aa)). Residue D1537 is the Proton donor; for dehydratase activity of the active site. Residues 1671 to 1697 (TAAPVPAPAPVPAKRAEPAPAAAQAAA) are disordered. A compositionally biased stretch (low complexity) spans 1688 to 1697 (PAPAAAQAAA). The region spanning 1697 to 1774 (ATQNPTITGA…ELKTYIEETF (78 aa)) is the Carrier domain. At S1734 the chain carries O-(pantetheine 4'-phosphoryl)serine.

The catalysed reaction is holo-[ACP] + 8 malonyl-CoA + 8 H(+) = atrochrysone carboxyl-[ACP] + 8 CO2 + 8 CoA + 2 H2O. It participates in secondary metabolite biosynthesis. Its function is as follows. Non-reducing polyketide synthase; part of the gene cluster that mediates the biosynthesis of physcion, a natural anthraquinone fungicide that can prevent plant fungal infections. The pathway begins with the polyketide synthase AcPKS that condenses 8 malonyl-CoA units to synthesize atrochrysone thioester which is released from the synthase by the atrochrysone carboxyl ACP thioesterase AcTE that breaks the thioester bond and leads to free atrochrysone carboxylic acid. Spontaneous decarboxylation of atrochrysone carboxylic acid leads to the formation of atrochrysone. Then, atrochrysone undergoes spontaneous dehydration and oxidation, giving the products emodin anthrone and emodin. The O-methyltransferase AcOMT then methylates the C-6 hydroxyl of emodin to form physcion. The polypeptide is Atrochrysone carboxylic acid synthase (Aspergillus chevalieri (Eurotium chevalieri)).